A 519-amino-acid polypeptide reads, in one-letter code: Putative lipase ATG15 (519 aa).

Residues Met-1 to Gly-5 lie on the Cytoplasmic side of the membrane. A helical; Signal-anchor for type II membrane protein membrane pass occupies residues Pro-6–Ser-26. Residues Ser-27–Asn-519 lie on the Lumenal side of the membrane. 6 N-linked (GlcNAc...) asparagine glycosylation sites follow: Asn-48, Asn-133, Asn-196, Asn-220, Asn-302, and Asn-309. Ser-318 (charge relay system) is an active-site residue. A glycan (N-linked (GlcNAc...) asparagine) is linked at Asn-361. The segment at Arg-481–Val-502 is disordered.

It belongs to the AB hydrolase superfamily. Lipase family. In terms of assembly, binds to both phosphatidylinositol (PI) and phosphatidylinositol 3,5-bisphosphate (PIP2).

It localises to the endosome. Its subcellular location is the multivesicular body membrane. It is found in the prevacuolar compartment membrane. The enzyme catalyses a triacylglycerol + H2O = a diacylglycerol + a fatty acid + H(+). Functionally, lipase which is essential for lysis of subvacuolar cytoplasm to vacuole targeted bodies and intravacuolar autophagic bodies. Involved in the lysis of intravacuolar multivesicular body (MVB) vesicles. The intravacuolar membrane disintegration by ATG15 is critical to life span extension. In Cryptococcus neoformans var. neoformans serotype D (strain B-3501A) (Filobasidiella neoformans), this protein is Putative lipase ATG15 (ATG15).